The chain runs to 387 residues: Cytochrome b (387 aa).

The next 4 helical transmembrane spans lie at 32–52 (FGSL…LLAC), 76–98 (FLLR…LHIG), 113–133 (TWNI…LGYC), and 179–199 (FFSL…MHLI). 2 residues coordinate heme b: histidine 82 and histidine 96. Heme b contacts are provided by histidine 183 and histidine 197. A ubiquinone is bound at residue histidine 202. Helical transmembrane passes span 225–245 (FLIK…YMVF), 289–309 (QLGV…PLLD), 321–341 (MGKF…WIGG), and 348–368 (FITI…ILIP).

It belongs to the cytochrome b family. As to quaternary structure, fungal cytochrome b-c1 complex contains 10 subunits; 3 respiratory subunits, 2 core proteins and 5 low-molecular weight proteins. Cytochrome b-c1 complex is a homodimer. Heme b is required as a cofactor.

Its subcellular location is the mitochondrion inner membrane. In terms of biological role, component of the ubiquinol-cytochrome c reductase complex (complex III or cytochrome b-c1 complex) that is part of the mitochondrial respiratory chain. The b-c1 complex mediates electron transfer from ubiquinol to cytochrome c. Contributes to the generation of a proton gradient across the mitochondrial membrane that is then used for ATP synthesis. The protein is Cytochrome b (cob) of Schizosaccharomyces octosporus (Fission yeast).